A 384-amino-acid polypeptide reads, in one-letter code: Monomethylxanthine methyltransferase 2 (384 aa).

S-adenosyl-L-homocysteine-binding residues include Y18, C61, N66, D100, L101, S139, F140, and C156. Theobromine-binding residues include Y157, H160, and W161. The Mg(2+) site is built by N178, F262, and N263. Y368 is a theobromine binding site.

The protein belongs to the methyltransferase superfamily. Type-7 methyltransferase family. Mg(2+) is required as a cofactor. As to expression, expressed, at low levels, in young leaves, floral buds and immature fruits (grains), but not in old leaves and mature fruits. Highly expressed in developing endosperm and flower buds. Detected in young leaves.

It carries out the reaction 7-methylxanthine + S-adenosyl-L-methionine = theobromine + S-adenosyl-L-homocysteine + H(+). It functions in the pathway alkaloid biosynthesis. Its function is as follows. Involved in the biosynthesis of caffeine. Catalyzes the conversion of 7-methylxanthine (7mX) to theobromine and with a lower activity of paraxanthine to caffeine. Does not have 1-N-methylation activity. The sequence is that of Monomethylxanthine methyltransferase 2 from Coffea arabica (Arabian coffee).